The chain runs to 320 residues: Homoserine kinase (320 aa).

Residue 100–110 participates in ATP binding; that stretch reads PLSSGMGSSAA.

The protein belongs to the GHMP kinase family. Homoserine kinase subfamily.

The protein resides in the cytoplasm. The catalysed reaction is L-homoserine + ATP = O-phospho-L-homoserine + ADP + H(+). It participates in amino-acid biosynthesis; L-threonine biosynthesis; L-threonine from L-aspartate: step 4/5. In terms of biological role, catalyzes the ATP-dependent phosphorylation of L-homoserine to L-homoserine phosphate. This chain is Homoserine kinase, found in Chlorobium phaeobacteroides (strain DSM 266 / SMG 266 / 2430).